We begin with the raw amino-acid sequence, 299 residues long: ATP phosphoribosyltransferase (299 aa).

This sequence belongs to the ATP phosphoribosyltransferase family. Long subfamily. Requires Mg(2+) as cofactor.

It is found in the cytoplasm. It carries out the reaction 1-(5-phospho-beta-D-ribosyl)-ATP + diphosphate = 5-phospho-alpha-D-ribose 1-diphosphate + ATP. It functions in the pathway amino-acid biosynthesis; L-histidine biosynthesis; L-histidine from 5-phospho-alpha-D-ribose 1-diphosphate: step 1/9. Feedback inhibited by histidine. In terms of biological role, catalyzes the condensation of ATP and 5-phosphoribose 1-diphosphate to form N'-(5'-phosphoribosyl)-ATP (PR-ATP). Has a crucial role in the pathway because the rate of histidine biosynthesis seems to be controlled primarily by regulation of HisG enzymatic activity. The sequence is that of ATP phosphoribosyltransferase from Shewanella denitrificans (strain OS217 / ATCC BAA-1090 / DSM 15013).